The primary structure comprises 122 residues: MSLGLIASRLVAVALVVVVACSTTWARSLEGSSSPVASLIRGRSLSKRANFDPSCAGVYDRELLGGLSRLCDDCYNVFREPKVATECRSNCFYNSVFVQCLEYLIPADLHEEYQAHVQTVGK.

The N-terminal stretch at 1-26 (MSLGLIASRLVAVALVVVVACSTTWA) is a signal peptide. 3 disulfides stabilise this stretch: cysteine 55-cysteine 91, cysteine 71-cysteine 87, and cysteine 74-cysteine 100. Position 120 is a valine amide (valine 120).

This sequence belongs to the arthropod CHH/MIH/GIH/VIH hormone family.

Its subcellular location is the secreted. Its function is as follows. Hormone found in the sinus gland of isopods and decapods which controls the blood sugar level. Has a secretagogue action over the amylase released from the midgut gland. May act as a stress hormone and may be involved in the control of molting and reproduction. This Penaeus monodon (Giant tiger prawn) protein is Crustacean hyperglycemic hormones 5 (CHH5).